Reading from the N-terminus, the 381-residue chain is Homoserine O-succinyltransferase (381 aa).

The AB hydrolase-1 domain occupies 45–360 (NAVLVCHALN…PHGHDAFLLD (316 aa)). Ser151 functions as the Nucleophile in the catalytic mechanism. Arg221 contacts substrate. Catalysis depends on residues Asp321 and His354. Asp355 provides a ligand contact to substrate.

Belongs to the AB hydrolase superfamily. MetX family. In terms of assembly, homodimer.

The protein localises to the cytoplasm. It carries out the reaction L-homoserine + succinyl-CoA = O-succinyl-L-homoserine + CoA. The protein operates within amino-acid biosynthesis; L-methionine biosynthesis via de novo pathway; O-succinyl-L-homoserine from L-homoserine: step 1/1. Functionally, transfers a succinyl group from succinyl-CoA to L-homoserine, forming succinyl-L-homoserine. This chain is Homoserine O-succinyltransferase, found in Burkholderia cenocepacia (strain HI2424).